A 373-amino-acid chain; its full sequence is Transaldolase (373 aa).

Residue Lys143 is the Schiff-base intermediate with substrate of the active site.

The protein belongs to the transaldolase family. Type 2 subfamily.

The protein resides in the cytoplasm. The catalysed reaction is D-sedoheptulose 7-phosphate + D-glyceraldehyde 3-phosphate = D-erythrose 4-phosphate + beta-D-fructose 6-phosphate. Its pathway is carbohydrate degradation; pentose phosphate pathway; D-glyceraldehyde 3-phosphate and beta-D-fructose 6-phosphate from D-ribose 5-phosphate and D-xylulose 5-phosphate (non-oxidative stage): step 2/3. Functionally, transaldolase is important for the balance of metabolites in the pentose-phosphate pathway. The chain is Transaldolase from Mycobacterium ulcerans (strain Agy99).